Consider the following 759-residue polypeptide: Glycerophosphodiester phosphodiesterase GDPDL3 (759 aa).

An N-terminal signal peptide occupies residues Met1–Ala27. Residues Gln28–Thr738 lie on the Extracellular side of the membrane. A GP-PDE 1 domain is found at Pro44–Leu344. Residues Asn99, Asn186, Asn242, Asn251, Asn326, Asn353, Asn413, Asn424, Asn488, Asn528, Asn540, and Asn647 are each glycosylated (N-linked (GlcNAc...) asparagine). A GP-PDE 2 domain is found at Phe360–Lys661. Residues Phe702–Pro734 form a disordered region. Over residues Ala719–Pro734 the composition is skewed to polar residues. Residues Arg739–Leu759 form a helical membrane-spanning segment.

This sequence belongs to the glycerophosphoryl diester phosphodiesterase family. Expressed in roots, shoots, rosette and cauline leaves, stems, flowers and siliques.

Its subcellular location is the cell membrane. The enzyme catalyses a sn-glycero-3-phosphodiester + H2O = an alcohol + sn-glycerol 3-phosphate + H(+). In terms of biological role, involved in primary cell wall organization. Required for the accumulation of crystalline cellulose. The sequence is that of Glycerophosphodiester phosphodiesterase GDPDL3 from Arabidopsis thaliana (Mouse-ear cress).